The chain runs to 397 residues: FAD-dependent monooxygenase trt8 (397 aa).

The active site involves Tyr-53. Residues Asp-145 and Ala-158 each contribute to the FAD site.

The protein belongs to the paxM FAD-dependent monooxygenase family. FAD serves as cofactor.

It participates in secondary metabolite biosynthesis; terpenoid biosynthesis. FAD-dependent monooxygenase; part of the gene cluster that mediates the biosynthesis of terretonin, a fungal meroterpenoid that acts as a mycotoxin. The first step of the pathway is the synthesis of 3,5-dimethylorsellinic acid (DMOA) by the polyketide synthase trt4. DMOA is then prenylated into farnesyl-DMOA by the polyprenyl transferase trt2. Methylation by the methyltransferase trt5 then leads to farnesyl-DMOA methyl ester which is further subject to epoxidation by the FAD-dependent monooxygenase trt8 to yield epoxyfarnesyl-DMOA methyl ester. Cyclization of epoxyfarnesyl-DMOA methyl ester by the terpene cyclase trt1 leads to a tetracycle intermediate which is in turn converted to preterretonin. Dehydrogenase trt9 comes next to transform preterretonin to preterrenoid. The FAD-dependent monooxygenase trt3 is then required for the C-hydroxylation at C16 of preterrenoid to yield terrenoid. The cytochrome P450 trt6 catalyzes three successive oxidations to transform terrenoid into an unstable intermediate, which then undergoes the D-ring expansion and unusual rearrangement of the methoxy group to afford the core skeleton of terretonin. Trt14 catalyzes the D-ring expansion of terretonin involving intramolecular methoxy rearrangement as well as the hydrolysis of the expanded D-ring and the methyl ester moiety. Finally, the nonheme iron-dependent dioxygenase trt7 accomplishes the last two oxidation reactions steps to complete the biosynthesis of terretonin. Terretonin C is produced via spontaneous decarboxylation of the terretonin precursor. Another shunt product of the terretonin biosynthesis is dihydrofarnesyl-DMOA, derived from epoxyfarnesyl-DMOA through hydrolysis of the epoxide. The polypeptide is FAD-dependent monooxygenase trt8 (Aspergillus terreus (strain NIH 2624 / FGSC A1156)).